The chain runs to 1070 residues: Envelopment polyprotein (1070 aa).

Residues 1–17 (MMFSRVMQLALICAVTC) form the signal peptide. The Lumenal segment spans residues 18–457 (EDNPCLWERF…SNPQCYPYGK (440 aa)). 8 disulfides stabilise this stretch: cysteine 22–cysteine 55, cysteine 152–cysteine 165, cysteine 211–cysteine 221, cysteine 267–cysteine 309, cysteine 296–cysteine 301, cysteine 353–cysteine 356, cysteine 360–cysteine 429, and cysteine 380–cysteine 385. Asparagine 269 carries an N-linked (GlcNAc...) asparagine; by host glycan. A helical membrane pass occupies residues 458–478 (WFLLFLILATLYIIVALLKTI). Topologically, residues 479–536 (MRIFMACLSVLYGPFIIIIKISRCLGRLGKRKGERTYVRLMEALDDERKPEVVRAPVS) are cytoplasmic. The segment at 480–522 (RIFMACLSVLYGPFIIIIKISRCLGRLGKRKGERTYVRLMEAL) is golgi retention signal. The internal signal sequence for glycoprotein C stretch occupies residues 541–560 (KQPRIVLFIVLALLVHMALC). The propeptide occupies 550-560 (VLALLVHMALC). The Lumenal portion of the chain corresponds to 550-1023 (VLALLVHMAL…NWLDTLFGAS (474 aa)). 10 disulfide bridges follow: cysteine 561–cysteine 602, cysteine 574–cysteine 584, cysteine 642–cysteine 831, cysteine 648–cysteine 696, cysteine 654–cysteine 703, cysteine 659–cysteine 685, cysteine 689–cysteine 694, cysteine 799–cysteine 813, cysteine 896–cysteine 966, and cysteine 906–cysteine 909. The fusion loop stretch occupies residues 648 to 654 (CRWAGSC). Residues 690–701 (GGAACGCFNAAP) are fusion loop. A helical membrane pass occupies residues 1024–1044 (LLGKILGIGLAILSPFILILI). The Cytoplasmic portion of the chain corresponds to 1045–1070 (LRWILRVVLRRSRIRREPKYEMAKYS).

The protein belongs to the phlebovirus envelope glycoprotein family. Heterodimer with glycoprotein C. As to quaternary structure, heterodimer with glycoprotein N. Homotrimer (postfusion). Post-translationally, specific enzymatic cleavages in vivo yield mature proteins Glycoprotein C, and Glycoprotein N. Glycosylated. In terms of processing, palmitoylated.

The protein resides in the virion membrane. Its subcellular location is the host Golgi apparatus membrane. The protein localises to the host endoplasmic reticulum membrane. In terms of biological role, structural component of the virion that interacts with glycoprotein C. It shields the hydrophobic fusion loops of the glycoprotein C, preventing premature fusion. The glycoprotein protrusions are arranged on an icosahedral lattice, with T=12 triangulation. They are able to attach the virion to the host cell receptor CD209/DC-SIGN and to promote fusion of membranes with the late endosome after endocytosis of the virion. Plays a role in the packaging of ribonucleoproteins during virus assembly. Structural component of the virion that interacts with glycoprotein N. Acts as a class II fusion protein that is activated upon acidification and subsequent repositioning of the glycoprotein N. The glycoprotein protrusions are arranged on an icosahedral lattice, with T=12 triangulation. They are able to attach the virion to the host cell receptor CD209/DC-SIGN and to promote fusion of membranes with the late endosome after endocytosis of the virion. The chain is Envelopment polyprotein (GP) from Amblyomma variegatum (Tropical bont tick).